A 231-amino-acid polypeptide reads, in one-letter code: 2,3-bisphosphoglycerate-dependent phosphoglycerate mutase (231 aa).

Substrate contacts are provided by residues 8 to 15 (RHGESEWN), 21 to 22 (TG), R60, 87 to 90 (ERHY), K98, 114 to 115 (RR), and 183 to 184 (GN). H9 (tele-phosphohistidine intermediate) is an active-site residue. The active-site Proton donor/acceptor is E87.

It belongs to the phosphoglycerate mutase family. BPG-dependent PGAM subfamily.

The enzyme catalyses (2R)-2-phosphoglycerate = (2R)-3-phosphoglycerate. It participates in carbohydrate degradation; glycolysis; pyruvate from D-glyceraldehyde 3-phosphate: step 3/5. In terms of biological role, catalyzes the interconversion of 2-phosphoglycerate and 3-phosphoglycerate. This chain is 2,3-bisphosphoglycerate-dependent phosphoglycerate mutase, found in Streptococcus equi subsp. zooepidemicus (strain H70).